The primary structure comprises 87 residues: U15-lycotoxin-Ls1f (87 aa).

The N-terminal stretch at Met1–Ser20 is a signal peptide. The WAP domain maps to Asp21–Thr66. Disulfide bonds link Cys24–Cys54, Cys32–Cys58, Cys41–Cys53, Cys42–Cys80, and Cys47–Cys62.

It belongs to the venom protein 11 family. 01 (wap-1) subfamily. Contains 5 disulfide bonds. As to expression, expressed by the venom gland.

Its subcellular location is the secreted. Functionally, has antibacterial activity. The chain is U15-lycotoxin-Ls1f from Lycosa singoriensis (Wolf spider).